A 213-amino-acid chain; its full sequence is MALIARNAKLLTGTAPFLQRAATIHTTLPSLSQQPASSPATSGGAQPPSMNTPAGISKPAEYVISKVDDLMNWARRGSIWPMTFGLACCAVEMMHAGAARYDFDRFGIIFRPSPRQSDVMIVAGTLTNKMAPALRKVYDQMPEPRWVISMGSCANGGGYYHYSYAVVRGCDRIVPVDIYVPGCPPTAEALLYGILQLQKKINRRKDLLMWWTQ.

Residues 1 to 31 (MALIARNAKLLTGTAPFLQRAATIHTTLPSL) constitute a mitochondrion transit peptide. Positions 30–42 (SLSQQPASSPATS) are enriched in low complexity. Positions 30 to 52 (SLSQQPASSPATSGGAQPPSMNT) are disordered. Residues cysteine 88, cysteine 89, cysteine 153, and cysteine 183 each contribute to the [4Fe-4S] cluster site.

This sequence belongs to the complex I 20 kDa subunit family. As to quaternary structure, complex I is composed of about 45 different subunits. This is a component of the iron-sulfur (IP) fragment of the enzyme. [4Fe-4S] cluster serves as cofactor.

The protein localises to the mitochondrion. The enzyme catalyses a ubiquinone + NADH + 5 H(+)(in) = a ubiquinol + NAD(+) + 4 H(+)(out). In terms of biological role, core subunit of the mitochondrial membrane respiratory chain NADH dehydrogenase (Complex I) that is believed to belong to the minimal assembly required for catalysis. Complex I functions in the transfer of electrons from NADH to the respiratory chain. The immediate electron acceptor for the enzyme is believed to be ubiquinone. This chain is NADH dehydrogenase [ubiquinone] iron-sulfur protein 7, mitochondrial, found in Solanum tuberosum (Potato).